We begin with the raw amino-acid sequence, 1002 residues long: Eukaryotic translation initiation factor 5B (1002 aa).

Disordered stretches follow at residues 1-172 (MAKK…GLAA) and 184-402 (EEQE…NKKD). Residues 13-23 (WDEEFEEDAAQ) show a composition bias toward acidic residues. The segment covering 27–37 (ISATPTPNPES) has biased composition (polar residues). Residues 47–57 (EASASAEGAEA) show a composition bias toward low complexity. Composition is skewed to basic and acidic residues over residues 75-111 (KKVI…EQAA) and 120-154 (QKEK…ESDK). Positions 155–172 (PSASAKKPAKKVPAGLAA) are enriched in low complexity. Composition is skewed to basic and acidic residues over residues 184–252 (EEQE…ERRR) and 267–276 (AKKDGEENKP). Residues 277-287 (KKVVYSKKKKR) show a composition bias toward basic residues. The span at 297–306 (IKSDSKKDSE) shows a compositional bias: basic and acidic residues. Composition is skewed to acidic residues over residues 307–342 (VVPD…EETQ) and 352–370 (DQNQ…EEEE). Low complexity predominate over residues 381–398 (STPAATPAATPTPSSASP). The tr-type G domain maps to 403–621 (LRSPICCILG…LLELTQKRMS (219 aa)). Ser-405 is modified (phosphoserine). Positions 412 to 419 (GHVDTGKT) are G1. Asp-415 is a binding site for K(+). Asp-415 contacts Na(+). Residues 415–420 (DTGKTK), Gln-431, and 437–439 (GIT) contribute to the GTP site. Thr-419 is a binding site for Mg(2+). Gly-437 is a binding site for K(+). Gly-437 lines the Na(+) pocket. The G2 stretch occupies residues 437 to 441 (GITQQ). Mg(2+) is bound at residue Thr-439. Residues 476–479 (DTPG) form a G3 region. GTP-binding positions include 530–533 (NKID) and 599–600 (AV). The tract at residues 530-533 (NKID) is G4. Residues 598–600 (SAV) are G5.

It belongs to the TRAFAC class translation factor GTPase superfamily. Classic translation factor GTPase family. IF-2 subfamily. It depends on Na(+) as a cofactor. The cofactor is K(+).

The protein localises to the cytoplasm. The enzyme catalyses GTP + H2O = GDP + phosphate + H(+). Plays a role in translation initiation. Translational GTPase that catalyzes the joining of the 40S and 60S subunits to form the 80S initiation complex with the initiator methionine-tRNA in the P-site base paired to the start codon. GTP binding and hydrolysis induces conformational changes in the enzyme that renders it active for productive interactions with the ribosome. The release of the enzyme after formation of the initiation complex is a prerequisite to form elongation-competent ribosomes. Stimulates 20S pre-rRNA cleavage to mature 18S rRNA by PIN-domain endonuclease NOB1. This chain is Eukaryotic translation initiation factor 5B, found in Saccharomyces cerevisiae (strain ATCC 204508 / S288c) (Baker's yeast).